A 570-amino-acid chain; its full sequence is NADPH oxidase 2 (570 aa).

Residues 2–9 are Cytoplasmic-facing; it reads GNWVVNEG. The helical transmembrane segment at 10–36 threads the bilayer; that stretch reads ISIFVILVWLGMNVFLFVWYYRVYDIP. The Extracellular segment spans residues 37–46; it reads DKFFYTRKLL. Residues 47 to 72 form a helical membrane-spanning segment; it reads GSALALARAPAACLNFNCMLILLPVC. The region spanning 54–286 is the Ferric oxidoreductase domain; it reads RAPAACLNFN…MFLYLCERLV (233 aa). The Cytoplasmic segment spans residues 73–95; it reads RNLLSFLRGSSACCSTRIRRQLD. The helical transmembrane segment at 96–130 threads the bilayer; the sequence is RNLTFHKMVAWMIALHTAIHTIAHLFNVEWCVNAR. Residues His101 and His115 each coordinate heme b. Topologically, residues 131-163 are extracellular; the sequence is VNNSDPYSIALSDIGDKPNETYLNFVRQRIKNP. N-linked (GlcNAc...) asparagine glycans are attached at residues Asn132 and Asn149. A Glycyl lysine isopeptide (Lys-Gly) (interchain with G-Cter in ubiquitin) cross-link involves residue Lys161. Residues 164–194 traverse the membrane as a helical segment; the sequence is EGGLYVAVTRLAGITGVVITLCLILIITSST. Residues 195–203 lie on the Cytoplasmic side of the membrane; it reads KTIRRSYFE. Residues Arg199 and Ser200 each coordinate FAD. Residues 204-222 form a helical membrane-spanning segment; the sequence is VFWYTHHLFVIFFIGLAIH. 5 residues coordinate heme b: Trp206, His209, His222, Arg226, and Ile227. Residues 223–267 lie on the Extracellular side of the membrane; the sequence is GAQRIVRGQTAESLLKHQPRNCYQNISQWGKIENCPIPEFSGNPP. An N-linked (GlcNAc...) asparagine glycan is attached at Asn247. Heme b-binding residues include Met268, Tyr280, and Arg287. Residues 268–285 traverse the membrane as a helical segment; the sequence is MTWKWIVGPMFLYLCERL. Topologically, residues 286 to 570 are cytoplasmic; sequence VRFWRSQQKV…VHFIFNKENF (285 aa). In terms of domain architecture, FAD-binding FR-type spans 287-397; that stretch reads RFWRSQQKVV…DGPFGTASED (111 aa). Glycyl lysine isopeptide (Lys-Gly) (interchain with G-Cter in ubiquitin) cross-links involve residues Lys294, Lys299, Lys306, Lys328, and Lys334. FAD is bound by residues Trp337, His338, Pro339, Thr341, His354, Arg356, Trp361, and Thr362. A Glycyl lysine isopeptide (Lys-Gly) (interchain with G-Cter in ubiquitin) cross-link involves residue Lys381. NADPH contacts are provided by Ile411, Arg446, and Thr481. Lys506 participates in a covalent cross-link: Glycyl lysine isopeptide (Lys-Gly) (interchain with G-Cter in ubiquitin). Residue Arg513 participates in NADPH binding. Lys567 is covalently cross-linked (Glycyl lysine isopeptide (Lys-Gly) (interchain with G-Cter in ubiquitin)).

Component of the phagocyte NADPH oxidase core complex/cytochrome b558 complex, composed of CYBB (heavy chain (beta)) and CYBA (light chain (alpha)). Component of the phagocyte NADPH oxidase complex composed of an obligatory core heterodimer formed by the membrane proteins CYBA and CYBB and the cytosolic regulatory subunits NCF1/p47-phox, NCF2/p67-phox, NCF4/p40-phox and the small GTPase RAC1 or RAC2. Interacts with NCF1 (phosphorylated form). Interacts with NCF2; the interaction is enhanced in the presence of GBP7. Interacts with RAC2. Interacts with RAC1. Interacts with calprotectin (S100A8/9). Interacts with NRROS; the interaction is direct and impairs formation of a stable NADPH oxidase complex. Interacts with CYBC1; CYBC1 may act as a chaperone stabilizing Cytochrome b-245 heterodimer. The CYBA-CYBB complex interacts with GBP7. Requires FAD as cofactor. In terms of processing, glycosylated. Phosphorylated on Ser and Thr residues by PKC during neutrophils activation. Phosphorylation enhances the NADPH oxidase activity and stimulates its interaction with RAC2, NCF2/p67-phox, and NCF1/p47-phox. Post-translationally, undergoes 'Lys-48'-linked polyubiquitination, likely by RNF145, triggering endoplasmic reticulum-associated degradation.

It is found in the cell membrane. The catalysed reaction is NADPH + 2 O2 = 2 superoxide + NADP(+) + H(+). Catalytic subunit of the phagocyte NADPH oxidase complex that mediates the transfer of electrons from cytosolic NADPH to O2 to produce the superoxide anion (O2(-)). In the activated complex, electrons are first transferred from NADPH to flavin adenine dinucleotide (FAD) and subsequently transferred via two heme molecules to molecular oxygen, producing superoxide through an outer-sphere reaction. Activation of the NADPH oxidase complex is initiated by the assembly of cytosolic subunits of the NADPH oxidase complex with the core NADPH oxidase complex to form a complex at the plasma membrane or phagosomal membrane. This activation process is initiated by phosphorylation dependent binding of the cytosolic NCF1/p47-phox subunit to the C-terminus of CYBA/p22-phox. NADPH oxidase complex assembly is impaired through interaction with NRROS. The protein is NADPH oxidase 2 of Bos taurus (Bovine).